The primary structure comprises 165 residues: Large ribosomal subunit protein uL10 (165 aa).

Belongs to the universal ribosomal protein uL10 family. In terms of assembly, part of the ribosomal stalk of the 50S ribosomal subunit. The N-terminus interacts with L11 and the large rRNA to form the base of the stalk. The C-terminus forms an elongated spine to which L12 dimers bind in a sequential fashion forming a multimeric L10(L12)X complex.

In terms of biological role, forms part of the ribosomal stalk, playing a central role in the interaction of the ribosome with GTP-bound translation factors. The sequence is that of Large ribosomal subunit protein uL10 from Burkholderia lata (strain ATCC 17760 / DSM 23089 / LMG 22485 / NCIMB 9086 / R18194 / 383).